The sequence spans 507 residues: Cytochrome P450 monooxygenase tpeC (507 aa).

A helical membrane pass occupies residues 24 to 44; it reads TLAIALIVGFVILKAIYNVFF. Heme is bound at residue Cys449.

This sequence belongs to the cytochrome P450 family. The cofactor is heme.

The protein localises to the membrane. The protein operates within secondary metabolite biosynthesis. Functionally, cytochrome P450 monooxygenase; part of the gene cluster that mediates the biosynthesis of polyesters containing 2,4-dihydroxy-6-(2-hydroxypropyl)benzoate and 3-hydroxybutyrate moieties, such as talapolyester G, 15G256beta and 15G256beta-2; as well as to oxidized derivatives such as 15G256alpha. The biosynthesis of the polyesters probably starts with the formation of the diketide 3-hydroxybutyryl-S-ACP catalyzed by the partially reducing polyketide synthase tpeA. The acceptance of 3-hydroxybutyryl by the non-reducing polyketide synthase tpeB would initiate further elongation and cyclization, catalyzed by KS and PT, respectively, to form 2,4-dihydroxy-6-(2-hydroxyn-propyl)benzoyl-S-ACP intermediate. The TE domain could catalyze lactonization at this step to yield 6-hydroxymellein as a derailment product. The polyesterification process maybe occurs when additional molecules of 3-hydroxybutyryl are transferred to tpeB. Following the first esterification step, an intramolecular cyclization catalyzed by the TE domain of tpeB would give talarodioxadione 1, whereas the ethyl esterification of talapolyester G perhaps happens spontaneously. Further oxidation by the cytochrome P450 monooxygenase tpeC then leads to the formation of oxidized derivatives. This is Cytochrome P450 monooxygenase tpeC from Talaromyces stipitatus (strain ATCC 10500 / CBS 375.48 / QM 6759 / NRRL 1006) (Penicillium stipitatum).